Reading from the N-terminus, the 87-residue chain is Small ribosomal subunit protein bS20 (87 aa).

Belongs to the bacterial ribosomal protein bS20 family.

Its function is as follows. Binds directly to 16S ribosomal RNA. This chain is Small ribosomal subunit protein bS20, found in Clostridium perfringens (strain 13 / Type A).